Consider the following 93-residue polypeptide: Mitochondrial import inner membrane translocase subunit TIM9 (93 aa).

The short motif at 43-67 (CFVDCVDSFTRKSLQKQEETCVMRC) is the Twin CX3C motif element. Disulfide bonds link cysteine 43–cysteine 67 and cysteine 47–cysteine 63.

This sequence belongs to the small Tim family. As to quaternary structure, heterohexamer; composed of 3 copies of TIM9 and 3 copies of TIM10, named soluble 70 kDa complex. The complex associates with the TIM22 component of the TIM22 complex. Interacts with multi-pass transmembrane proteins in transit. In terms of tissue distribution, expressed in roots, flowers, young cotyledons and leaves.

Its subcellular location is the mitochondrion intermembrane space. In terms of biological role, mitochondrial intermembrane chaperone that participates in the import and insertion of multi-pass transmembrane proteins into the mitochondrial inner membrane. May also be required for the transfer of beta-barrel precursors from the TOM complex to the sorting and assembly machinery (SAM complex) of the outer membrane. Acts as a chaperone-like protein that protects the hydrophobic precursors from aggregation and guide them through the mitochondrial intermembrane space. In Arabidopsis thaliana (Mouse-ear cress), this protein is Mitochondrial import inner membrane translocase subunit TIM9 (TIM9).